We begin with the raw amino-acid sequence, 344 residues long: GDSL esterase/lipase At5g03590 (344 aa).

Positions 1–19 are cleaved as a signal peptide; it reads MHYLMKLFFSLSLFFGING. Ser-41 functions as the Nucleophile in the catalytic mechanism. N-linked (GlcNAc...) asparagine glycosylation is found at Asn-126, Asn-227, and Asn-238. Asp-318 is an active-site residue.

It belongs to the 'GDSL' lipolytic enzyme family.

The protein resides in the secreted. This chain is GDSL esterase/lipase At5g03590, found in Arabidopsis thaliana (Mouse-ear cress).